Here is a 311-residue protein sequence, read N- to C-terminus: MKKKIGLLVMAYGTPYKEEDIERYYTHIRRGRKPSPEMLEDLTGRYRAIGGISPLATITLEQAKKLETRLNEMQDEVEYHMYLGLKHIEPFIEDAVQAMHKDGIEDAIALVLAPHYSTFSVKSYVGRAQEEAGKLGNLTIHGIDSWYKEPKFIQYWVDAVKGIYNGMSEAEREKAVLIVSAHSLPEKIIALGDPYPDQLNETADYIARGAEVANYAVGWQSAGNTPDPWIGPDVQDLTRELNEKYGYNSFVYAPVGFVAEHLEVLYDNDFECKVVTDEIGAKYYRPEMPNASDAFIDCLADVVLKKKESVM.

Residues tyrosine 12, arginine 29, 45–46 (RY), serine 53, and tyrosine 124 each bind Fe-coproporphyrin III. Fe(2+) is bound by residues histidine 182 and glutamate 263.

This sequence belongs to the ferrochelatase family.

The protein localises to the cytoplasm. It carries out the reaction Fe-coproporphyrin III + 2 H(+) = coproporphyrin III + Fe(2+). The protein operates within porphyrin-containing compound metabolism; protoheme biosynthesis. Involved in coproporphyrin-dependent heme b biosynthesis. Catalyzes the insertion of ferrous iron into coproporphyrin III to form Fe-coproporphyrin III. This chain is Coproporphyrin III ferrochelatase, found in Bacillus mycoides (strain KBAB4) (Bacillus weihenstephanensis).